The following is a 155-amino-acid chain: Ribosome maturation factor RimP (155 aa).

This sequence belongs to the RimP family.

The protein resides in the cytoplasm. Required for maturation of 30S ribosomal subunits. The protein is Ribosome maturation factor RimP of Prochlorococcus marinus (strain MIT 9312).